A 606-amino-acid polypeptide reads, in one-letter code: Adenine deaminase (606 aa).

It belongs to the metallo-dependent hydrolases superfamily. Adenine deaminase family. It depends on Mn(2+) as a cofactor.

It carries out the reaction adenine + H2O + H(+) = hypoxanthine + NH4(+). The protein is Adenine deaminase of Rubrobacter xylanophilus (strain DSM 9941 / JCM 11954 / NBRC 16129 / PRD-1).